The sequence spans 481 residues: p-aminobenzoyl-glutamate hydrolase subunit B (481 aa).

In terms of assembly, forms a heterodimer with AbgA. Mn(2+) serves as cofactor.

In terms of biological role, component of the p-aminobenzoyl-glutamate hydrolase multicomponent enzyme system which catalyzes the cleavage of p-aminobenzoyl-glutamate (PABA-GLU) to form p-aminobenzoate (PABA) and glutamate. AbgAB does not degrade dipeptides and the physiological role of abgABT should be clarified. This Escherichia coli (strain K12) protein is p-aminobenzoyl-glutamate hydrolase subunit B (abgB).